A 97-amino-acid polypeptide reads, in one-letter code: Protein RALF-like 2 (97 aa).

Positions 1 to 25 (MEARHMLVTILLLSFVFMNIMKVEA) are cleaved as a signal peptide. Disulfide bonds link C42-C49 and C61-C67.

Belongs to the plant rapid alkalinization factor (RALF) family.

Its subcellular location is the secreted. Cell signaling peptide that may regulate plant stress, growth, and development. Mediates a rapid alkalinization of extracellular space by mediating a transient increase in the cytoplasmic Ca(2+) concentration leading to a calcium-dependent signaling events through a cell surface receptor and a concomitant activation of some intracellular mitogen-activated protein kinases. In Arabidopsis thaliana (Mouse-ear cress), this protein is Protein RALF-like 2 (RALFL2).